Reading from the N-terminus, the 212-residue chain is Ribonuclease HII (212 aa).

The region spanning 22–212 (ILIAGLDEAG…APLKGMIDGL (191 aa)) is the RNase H type-2 domain. Residues D28, E29, and D123 each contribute to the a divalent metal cation site.

This sequence belongs to the RNase HII family. Mn(2+) is required as a cofactor. Requires Mg(2+) as cofactor.

The protein localises to the cytoplasm. It catalyses the reaction Endonucleolytic cleavage to 5'-phosphomonoester.. Functionally, endonuclease that specifically degrades the RNA of RNA-DNA hybrids. In Dehalococcoides mccartyi (strain ATCC BAA-2100 / JCM 16839 / KCTC 5957 / BAV1), this protein is Ribonuclease HII.